The sequence spans 290 residues: MRIADYSVTKAVLERHGFTFKKSFGQNFLTDTNILQKIVDTAEIDDQVNVIEIGPGIGALTEFLAERAAQVMAFEIDHRLVPILADTLRDFDNVTVVNEDILKVDLAQHIQNFKNPDLPIKVVANLPYYITTPILMHLIESGIPFCEFVVMMQKEVADRISAQPNTKAYGSLSIAVQYYMTAKVAFIVPRTVFVPAPNVDSAILKMVRRPEPAVAVEDENFFFKVSKASFTHRRKTLWNNLTGYFGKTEEVKDKLTKALDQAGLSPSVRGEALSLAEFAGLADALKGQGL.

Positions 27, 29, 54, 75, 100, and 125 each coordinate S-adenosyl-L-methionine.

This sequence belongs to the class I-like SAM-binding methyltransferase superfamily. rRNA adenine N(6)-methyltransferase family. RsmA subfamily.

Its subcellular location is the cytoplasm. The catalysed reaction is adenosine(1518)/adenosine(1519) in 16S rRNA + 4 S-adenosyl-L-methionine = N(6)-dimethyladenosine(1518)/N(6)-dimethyladenosine(1519) in 16S rRNA + 4 S-adenosyl-L-homocysteine + 4 H(+). Specifically dimethylates two adjacent adenosines (A1518 and A1519) in the loop of a conserved hairpin near the 3'-end of 16S rRNA in the 30S particle. May play a critical role in biogenesis of 30S subunits. In Streptococcus pneumoniae (strain ATCC 700669 / Spain 23F-1), this protein is Ribosomal RNA small subunit methyltransferase A.